The chain runs to 1191 residues: Zinc finger protein ush (1191 aa).

2 disordered regions span residues 1–153 (MLSS…PKYP) and 169–194 (PDAKELTLPDSRLLAPPPLVKPDTQA). Positions 19–28 (VDSRDSKDLS) are enriched in basic and acidic residues. The span at 61-73 (IDDDADEDAEFEE) shows a compositional bias: acidic residues. Phosphoserine occurs at positions 116 and 118. A compositionally biased stretch (pro residues) spans 130-151 (ATPPSEPEASPCPSPSPCPTPK). The CCHC FOG-type 1 zinc-finger motif lies at 202 to 235 (LLKPARFMCLPCGIAFSSPSTLEAHQAYYCSHRI). Cys210, Cys213, His226, and Cys231 together coordinate Zn(2+). The interval 239–274 (DEAGSDKSGAGGSGATAGDAAGLTGGSTEPPAKMAR) is disordered. A compositionally biased stretch (low complexity) spans 254–266 (TAGDAAGLTGGST). The C2H2-type 1 zinc finger occupies 279–301 (YGCTQCSYSADKKVSLNRHMRMH). A disordered region spans residues 304-338 (SPAAPTLAGLPSLLQNGIAPPGVTPNPMEDSSSQQ). A CCHC FOG-type 2 zinc finger spans residues 335 to 368 (SSQQTDRYCSHCDIRFNNIKTYRAHKQHYCSSRR). Positions 343, 346, 359, and 364 each coordinate Zn(2+). Disordered stretches follow at residues 361 to 413 (QHYC…ARNK), 504 to 540 (EPERPSAPSSAAEATEAKSSPPEPKRKEAGLTRESAP), and 601 to 635 (APSLPSSPSMSPSPKRRAISPRSSGAGSASSMSPP). Residues 383 to 394 (AGSGPGSAGGSI) show a composition bias toward gly residues. Low complexity-rich tracts occupy residues 509-523 (SAPSSAAEATEAKSS), 602-613 (PSLPSSPSMSPS), and 620-635 (SPRSSGAGSASSMSPP). 2 consecutive CCHC FOG-type zinc fingers follow at residues 720 to 753 (YVKKGVSKCMECNIVFCKYENYLAHKQHYCSARS) and 791 to 824 (PVAYQQLICAACGIKYTSLDNLRAHQNYYCPKGG). Cys728, Cys731, His744, Cys749, Cys799, Cys802, His815, and Cys820 together coordinate Zn(2+). 3 C2H2-type zinc fingers span residues 882–907 (NKCPVCGVVSPTAALAKKHMEMHGTV), 910–932 (YRCSICQYKGNTLRGMRTHIRTH), and 983–1006 (FNCDYCNYVSTYKGNVLRHMKLMH). Residues 1011–1073 (INSPSISPDT…HENNNSPIAT (63 aa)) are disordered. Ser1013, Ser1015, and Ser1017 each carry phosphoserine. The span at 1025 to 1040 (VTSNPTTNQHSNSDVS) shows a compositional bias: polar residues. The CCHC FOG-type 5 zinc finger occupies 1113-1146 (AAEVMKKYCSTCDISFNYVKTYLAHKQFYCKNKP). Zn(2+) contacts are provided by Cys1121, Cys1124, His1137, and Cys1142. Ser1156 is subject to Phosphoserine.

This sequence belongs to the FOG (Friend of GATA) family. In terms of assembly, interacts with pnr, although weak this interaction is essential. Interacts with the isoform SrpNC of srp. Interacts with CtBP corepressor. First expressed in stage 5 at high levels in the primordium of the amnioserosa. Also expressed in germ band extending embryos in cells of the developing anterior and posterior midgut and in hemocyte precursors present in the cephalic mesoderm. In embryonic stage 8, it is expressed in blood cell precursors. By stage 10, it is expressed in hemocyte precursors that have spread throughout the lateral and ventral head mesoderm. By stage 11, it is expressed in the dorsal ectoderm and in precursor cells of the hemocytes and fat body. As embryogenesis proceeds, it is also expressed in stage 13 plasmatocytes migrating throughout the head mesoderm and down the ventral midline. By late embryogenesis, expression strongly decreases but remains in the dorsal ectoderm during dorsal closure, in cells within, or associated with, the central nervous system, and in plasmatocytes circulating throughout the embryonic hemolymph. During larval development, it is expressed in primary and secondary lobes of lymph glands. Expressed in the dorsal part of the thoracic imaginal disk.

The protein resides in the nucleus. Functionally, transcription regulator that modulates expression mediated by transcription factors of the GATA family such as pnr and srp. Represses transcription of proneural achaete-scute complex (AS-C), which is usually activated by pnr. Involved in cardiogenesis, blood, and eye development. During hematopoiesis, it is required to restrict the number of crystal cells, probably via its interaction with the isoform SrpNC of srp. Negatively regulates expression of sr. Probably acts by interacting with the GATA-type zinc finger of proteins such as pnr and srp, possibly antagonizing the interaction between the GATA-type zinc finger and some cofactor. In Drosophila melanogaster (Fruit fly), this protein is Zinc finger protein ush (ush).